The following is a 152-amino-acid chain: Large ribosomal subunit protein uL30 (152 aa).

Belongs to the universal ribosomal protein uL30 family. Part of the 50S ribosomal subunit.

This Methanobrevibacter smithii (strain ATCC 35061 / DSM 861 / OCM 144 / PS) protein is Large ribosomal subunit protein uL30.